Consider the following 2197-residue polypeptide: Activating signal cointegrator 1 complex subunit 3 (2197 aa).

S12 carries the phosphoserine modification. Coiled coils occupy residues K18–I80 and I328–E356. Positions D487–L670 constitute a Helicase ATP-binding 1 domain. A500 to T507 contacts ATP. K573 is modified (N6-acetyllysine). A DEVH box motif is present at residues D612 to H615. Residues Q697–V915 form the Helicase C-terminal 1 domain. In terms of domain architecture, SEC63 1 spans S979–F1288. Residues H1337–F1512 form the Helicase ATP-binding 2 domain. A1350–T1357 contacts ATP. The short motif at D1454–H1457 is the DEIH box element. Residues R1565–I1739 form the Helicase C-terminal 2 domain. The SEC63 2 domain maps to P1812–I2175.

It belongs to the helicase family. In terms of assembly, identified in the ASCC complex that contains ASCC1, ASCC2 and ASCC3. Functions as a scaffolding subunit that interacts directly with both ASCC1 and ASCC2. Interacts directly with ALKBH3, and thereby recruits ALKBH3 to the ASCC complex. Part of the ASC-1/TRIP4 complex, that contains TRIP4, ASCC1, ASCC2 and ASCC3. Part of the RQT (ribosome quality control trigger) complex, that contains ASCC2, ASCC3 and TRIP4. Associates with ribosomes; recruited to collided ribosomes. Interacts with ZCCHC4. Interacts with ZNF598. Interacts with RPS3.

The protein resides in the nucleus. It localises to the nucleus speckle. Its subcellular location is the cytoplasm. The protein localises to the cytosol. It carries out the reaction Couples ATP hydrolysis with the unwinding of duplex DNA by translocating in the 3'-5' direction.. It catalyses the reaction ATP + H2O = ADP + phosphate + H(+). ATPase involved both in DNA repair and rescue of stalled ribosomes. 3'-5' DNA helicase involved in repair of alkylated DNA: promotes DNA unwinding to generate single-stranded substrate needed for ALKBH3, enabling ALKBH3 to process alkylated N3-methylcytosine (3mC) within double-stranded regions. Also involved in activation of the ribosome quality control (RQC) pathway, a pathway that degrades nascent peptide chains during problematic translation. Drives the splitting of stalled ribosomes that are ubiquitinated in a ZNF598-dependent manner, as part of the ribosome quality control trigger (RQT) complex. Part of the ASC-1 complex that enhances NF-kappa-B, SRF and AP1 transactivation. The polypeptide is Activating signal cointegrator 1 complex subunit 3 (Ascc3) (Rattus norvegicus (Rat)).